A 92-amino-acid polypeptide reads, in one-letter code: YcgL domain-containing protein Shewana3_2381 (92 aa).

Positions 1 to 85 constitute a YcgL domain; the sequence is MLCAVYKSSR…PQVNLLAEHR (85 aa).

The polypeptide is YcgL domain-containing protein Shewana3_2381 (Shewanella sp. (strain ANA-3)).